The sequence spans 519 residues: Galactokinase (519 aa).

4 residues coordinate alpha-D-galactose: Arg-47, Glu-53, His-54, and Asp-56. Gly-159, Gly-161, Ser-163, and Ser-164 together coordinate ATP. Alpha-D-galactose is bound at residue Asp-209. The Proton acceptor role is filled by Asp-209. Asn-257 and Lys-258 together coordinate ATP. Tyr-266 contacts alpha-D-galactose.

This sequence belongs to the GHMP kinase family. GalK subfamily.

The enzyme catalyses alpha-D-galactose + ATP = alpha-D-galactose 1-phosphate + ADP + H(+). It participates in carbohydrate metabolism; galactose metabolism. Its function is as follows. Galactokinase is a key enzyme in the galactose metabolism where it catalyzes the conversion of alpha-D-galactose to galactose 1-phosphate. Can also induce the transcription of the gal genes in response to the organism being challenged with galactose as the sole source of carbon. This Schizosaccharomyces pombe (strain 972 / ATCC 24843) (Fission yeast) protein is Galactokinase (gal1).